A 192-amino-acid chain; its full sequence is Large ribosomal subunit protein bL25 (192 aa).

This sequence belongs to the bacterial ribosomal protein bL25 family. CTC subfamily. In terms of assembly, part of the 50S ribosomal subunit; part of the 5S rRNA/L5/L18/L25 subcomplex. Contacts the 5S rRNA. Binds to the 5S rRNA independently of L5 and L18.

Functionally, this is one of the proteins that binds to the 5S RNA in the ribosome where it forms part of the central protuberance. The protein is Large ribosomal subunit protein bL25 of Porphyromonas gingivalis (strain ATCC 33277 / DSM 20709 / CIP 103683 / JCM 12257 / NCTC 11834 / 2561).